Here is a 119-residue protein sequence, read N- to C-terminus: Ribonuclease P protein component (119 aa).

The protein belongs to the RnpA family. Consists of a catalytic RNA component (M1 or rnpB) and a protein subunit.

The enzyme catalyses Endonucleolytic cleavage of RNA, removing 5'-extranucleotides from tRNA precursor.. Functionally, RNaseP catalyzes the removal of the 5'-leader sequence from pre-tRNA to produce the mature 5'-terminus. It can also cleave other RNA substrates such as 4.5S RNA. The protein component plays an auxiliary but essential role in vivo by binding to the 5'-leader sequence and broadening the substrate specificity of the ribozyme. This chain is Ribonuclease P protein component, found in Syntrophus aciditrophicus (strain SB).